Reading from the N-terminus, the 1109-residue chain is MADGPRCKRRKQANPRRNNVTNYNTVVEANSDSDDEDKLHIVEEESVTDAADCEGGVPDDELPTDQTVLPGGSDRAGSAKNCWQDDVKDDECDSDAENEQNHDPNVEEFLQQQDTAVIYPEAPEEDQRQGTPEASGHDDNGTPDAFSQLLTCPYCDRGYKRFTSLKEHIKYRHEKNEDNFSCSLCSYTFAYRTQLERHMTSHKSGREQRHVTQSGGNRKFKCTECGKAFKYKHHLKEHLRIHSGEKPYECPNCKKRFSHSGSYSSHISSKKCISLMPVNGRPRSGLKTSQCSSPSLSTSPGSPTRPQIRQKIENKPLQEPLSVNQIKTEPVDYEFKPIVVASGINCSTPLQNGVFSGGGQLQATSSPQGVVQAVVLPTVGLVSPISINLSDIQNVLKVAVDGNIIRQVLENNQASLASKEQEAVSASSIQQGGHSVISAISLPLVDQDGTTKIIINYSLEQPGQLQVVPQNLKKENPAPPKSCKSEKSPEDLTVKSEKDKSFDGAADESTCLLCEDCPGDLNALPELKHYDPEHPAQPPPPAPATEKPESSASSAGNGDLSPSQPPLKNLLSLLKAYYALNAQPSTEELTKIADSVNLPLDVVKKWFEKMQAGQIPGQSLEPPSPGPGSGNIPAKTEEQPQPVDGNEPQEDSTRGQSPLKMTSSPVLPVGSAINGSRSCTSSPSPLNLSSARNPQGYSCVSEGTQEEPQVEPLDLSLPKQQGELLERSTVSSVYQNSVYSVQEEPLNLSCAKKEPQKDSCVTDSEPVVNVVPPSANPINIAIPTVTAQLPTIVAIADQNSVPCLRALAANKQTILIPQVAYTYSATVSPAMQEPPVKVIQPNGNQDERQDTSSEGVSVEDQNDSDCTPPKKKTRKAENGMYACDLCDKIFQKSSSLLRHKYEHTGKRPHECGICRKAFKHKHHLIEHMRLHSGEKPYQCDKCGKRFSHSGSYSQHMNHRYSYCKRGAEDRDAMEQEDTGPEALPEVLPTELVGARASPSQADSDERESLTREEDEDSEKEEEEEDKEMEELQEDKECENPQEEEEEEEEEEEEEEEEEEEEAEEAEHEAAAAKTGGAVEEEAAQQAGSFQQKASGSESKRLSEEKTNEA.

Disordered regions lie at residues 1-106 (MADG…DPNV) and 123-143 (PEEDQRQGTPEASGHDDNGTP). Over residues 15–30 (PRRNNVTNYNTVVEAN) the composition is skewed to low complexity. Phosphoserine occurs at positions 31 and 33. A compositionally biased stretch (acidic residues) spans 87–98 (VKDDECDSDAEN). The C2H2-type 1 zinc finger occupies 150–173 (LTCPYCDRGYKRFTSLKEHIKYRH). Glycyl lysine isopeptide (Lys-Gly) (interchain with G-Cter in SUMO2) cross-links involve residues lysine 166 and lysine 175. C2H2-type zinc fingers lie at residues 180–202 (FSCSLCSYTFAYRTQLERHMTSH) and 220–242 (FKCTECGKAFKYKHHLKEHLRIH). A C2H2-type 4; atypical zinc finger spans residues 248 to 272 (YECPNCKKRFSHSGSYSSHISSKKC). A disordered region spans residues 278-307 (VNGRPRSGLKTSQCSSPSLSTSPGSPTRPQ). Lysine 287 is covalently cross-linked (Glycyl lysine isopeptide (Lys-Gly) (interchain with G-Cter in SUMO2)). Residues 288-304 (TSQCSSPSLSTSPGSPT) show a composition bias toward low complexity. 2 positions are modified to phosphoserine: serine 293 and serine 302. Residues lysine 311 and lysine 315 each participate in a glycyl lysine isopeptide (Lys-Gly) (interchain with G-Cter in SUMO2) cross-link. A Glycyl lysine isopeptide (Lys-Gly) (interchain with G-Cter in SUMO); alternate cross-link involves residue lysine 327. A Glycyl lysine isopeptide (Lys-Gly) (interchain with G-Cter in SUMO2); alternate cross-link involves residue lysine 327. Residues lysine 419, lysine 473, lysine 484, lysine 495, and lysine 528 each participate in a glycyl lysine isopeptide (Lys-Gly) (interchain with G-Cter in SUMO2) cross-link. 3 disordered regions span residues 468 to 501 (VPQNLKKENPAPPKSCKSEKSPEDLTVKSEKDKS), 525 to 566 (PELK…SQPP), and 614 to 711 (QIPG…PQVE). A compositionally biased stretch (basic and acidic residues) spans 483 to 501 (CKSEKSPEDLTVKSEKDKS). The homeobox; atypical DNA-binding region spans 559 to 618 (DLSPSQPPLKNLLSLLKAYYALNAQPSTEELTKIADSVNLPLDVVKKWFEKMQAGQIPGQ). The span at 654 to 665 (RGQSPLKMTSSP) shows a compositional bias: polar residues. Residues serine 657, serine 664, serine 671, and serine 678 each carry the phosphoserine modification. Residues 673–703 (INGSRSCTSSPSPLNLSSARNPQGYSCVSEG) are compositionally biased toward polar residues. A Phosphothreonine modification is found at threonine 680. Residue serine 682 is modified to Phosphoserine. Lysine 752 participates in a covalent cross-link: Glycyl lysine isopeptide (Lys-Gly) (interchain with G-Cter in SUMO); alternate. Residue lysine 752 forms a Glycyl lysine isopeptide (Lys-Gly) (interchain with G-Cter in SUMO2); alternate linkage. The tract at residues 834–873 (PPVKVIQPNGNQDERQDTSSEGVSVEDQNDSDCTPPKKKT) is disordered. 2 consecutive C2H2-type zinc fingers follow at residues 881 to 903 (YACDLCDKIFQKSSSLLRHKYEH) and 909 to 931 (HECGICRKAFKHKHHLIEHMRLH). Residues 937–958 (YQCDKCGKRFSHSGSYSQHMNH) form a C2H2-type 7; atypical zinc finger. Positions 968–1109 (EDRDAMEQED…RLSEEKTNEA (142 aa)) are disordered. The segment covering 1012–1066 (EEDEDSEKEEEEEDKEMEELQEDKECENPQEEEEEEEEEEEEEEEEEEEEAEEAE) has biased composition (acidic residues). Low complexity predominate over residues 1071 to 1087 (AAKTGGAVEEEAAQQAG). Positions 1097-1109 (ESKRLSEEKTNEA) are enriched in basic and acidic residues.

This sequence belongs to the delta-EF1/ZFH-1 C2H2-type zinc-finger family. As to quaternary structure, interacts (via N-terminus) with SMARCA4/BRG1. In terms of processing, ubiquitinated, leading to degradation in a proteasome-dependent manner. Deubiquitinated by USP51, leading to stabilization.

The protein resides in the nucleus. Functionally, acts as a transcriptional repressor. Binds to E-box sequences in the immunoglobulin heavy chain enhancer as well as in the regulatory regions of many other tissue-specific genes. Represses E-cadherin promoter and induces an epithelial-mesenchymal transition (EMT) by recruiting SMARCA4/BRG1. Represses BCL6 transcription in the presence of the corepressor CTBP1. Positively regulates neuronal differentiation. Represses RCOR1 transcription activation during neurogenesis. Represses transcription by binding to the E box (5'-CANNTG-3'). In the absence of TGFB1, acts as a repressor of COL1A2 transcription via binding to the E-box in the upstream enhancer region. The chain is Zinc finger E-box-binding homeobox 1 from Rattus norvegicus (Rat).